A 59-amino-acid polypeptide reads, in one-letter code: UPF0391 membrane protein lpp2589 (59 aa).

A run of 2 helical transmembrane segments spans residues 5–25 and 30–50; these read ALIF…GIAV and IAKI…IMGL.

Belongs to the UPF0391 family.

It localises to the cell membrane. This chain is UPF0391 membrane protein lpp2589, found in Legionella pneumophila (strain Paris).